The primary structure comprises 176 residues: Inorganic pyrophosphatase (176 aa).

The substrate site is built by Lys30, Arg44, and Tyr56. Residues Asp66, Asp71, and Asp103 each contribute to the Mg(2+) site. A substrate-binding site is contributed by Tyr142.

This sequence belongs to the PPase family. Homohexamer. The cofactor is Mg(2+).

The protein resides in the cytoplasm. The catalysed reaction is diphosphate + H2O = 2 phosphate + H(+). Functionally, catalyzes the hydrolysis of inorganic pyrophosphate (PPi) forming two phosphate ions. The chain is Inorganic pyrophosphatase from Escherichia coli O6:H1 (strain CFT073 / ATCC 700928 / UPEC).